The chain runs to 269 residues: Formamidopyrimidine-DNA glycosylase (269 aa).

Pro2 serves as the catalytic Schiff-base intermediate with DNA. Glu3 functions as the Proton donor in the catalytic mechanism. Lys57 acts as the Proton donor; for beta-elimination activity in catalysis. The DNA site is built by His90, Arg109, and Lys150. The FPG-type zinc-finger motif lies at 235–269 (RVYGRNGEPCRTCGTPIETAKHGQRSTFFCRRCQK). Catalysis depends on Arg259, which acts as the Proton donor; for delta-elimination activity.

Belongs to the FPG family. Monomer. Requires Zn(2+) as cofactor.

It catalyses the reaction Hydrolysis of DNA containing ring-opened 7-methylguanine residues, releasing 2,6-diamino-4-hydroxy-5-(N-methyl)formamidopyrimidine.. The catalysed reaction is 2'-deoxyribonucleotide-(2'-deoxyribose 5'-phosphate)-2'-deoxyribonucleotide-DNA = a 3'-end 2'-deoxyribonucleotide-(2,3-dehydro-2,3-deoxyribose 5'-phosphate)-DNA + a 5'-end 5'-phospho-2'-deoxyribonucleoside-DNA + H(+). Involved in base excision repair of DNA damaged by oxidation or by mutagenic agents. Acts as a DNA glycosylase that recognizes and removes damaged bases. Has a preference for oxidized purines, such as 7,8-dihydro-8-oxoguanine (8-oxoG). Has AP (apurinic/apyrimidinic) lyase activity and introduces nicks in the DNA strand. Cleaves the DNA backbone by beta-delta elimination to generate a single-strand break at the site of the removed base with both 3'- and 5'-phosphates. The protein is Formamidopyrimidine-DNA glycosylase of Pectobacterium carotovorum subsp. carotovorum (strain PC1).